The following is a 217-amino-acid chain: Small ribosomal subunit protein uS3 (217 aa).

The region spanning 38–106 (IRKYIEQRLA…RVHINIIEIK (69 aa)) is the KH type-2 domain.

This sequence belongs to the universal ribosomal protein uS3 family. In terms of assembly, part of the 30S ribosomal subunit. Forms a tight complex with proteins S10 and S14.

In terms of biological role, binds the lower part of the 30S subunit head. Binds mRNA in the 70S ribosome, positioning it for translation. In Lactiplantibacillus plantarum (strain ATCC BAA-793 / NCIMB 8826 / WCFS1) (Lactobacillus plantarum), this protein is Small ribosomal subunit protein uS3.